The sequence spans 593 residues: Tyrosine-protein phosphatase non-receptor type 11 (593 aa).

Residue Thr2 is modified to N-acetylthreonine. 2 consecutive SH2 domains span residues 6–102 (WFHP…KYPL) and 112–216 (WFHG…KQPL). A phosphotyrosine mark is found at Tyr62 and Tyr66. Positions 247 to 521 (FWEEFETLQQ…RFIYMAVQHY (275 aa)) constitute a Tyrosine-protein phosphatase domain. Substrate contacts are provided by residues Asp425, 459 to 465 (CSAGIGR), and Gln506. The Phosphocysteine intermediate role is filled by Cys459. A phosphotyrosine; by PDGFR mark is found at Tyr542 and Tyr580.

Belongs to the protein-tyrosine phosphatase family. Non-receptor class 2 subfamily. Interacts with CD84 and with phosphorylated SIT1 and MZPL1. Interacts with FCRL4, FCRL6 and ANKHD1. Interacts with GAREM1 (tyrosine phosphorylated); the interaction increases MAPK/ERK activity and does not affect the GRB2/SOS complex formation. Interacts with PTPNS1 and BCAR3. Interacts with phosphorylated LIME1. Interacts with SHB and INPP5D/SHIP1. Interacts with KIR2DL1; the interaction is enhanced by ARRB2. Interacts with GAB2. Interacts with TERT; the interaction retains TERT in the nucleus. Interacts with PECAM1 and FER. Interacts with EPHA2 (activated); participates in PTK2/FAK1 dephosphorylation in EPHA2 downstream signaling. Interacts with MILR1 (tyrosine phosphorylated). Interacts with FLT1 (tyrosine-phosphorylated), FLT3 (tyrosine-phosphorylated), FLT4 (tyrosine-phosphorylated), KIT and GRB2. Interacts with ROS1; mediates PTPN11 phosphorylation. Interacts with PDGFRA (tyrosine phosphorylated). Interacts with PDGFRB (tyrosine phosphorylated); this interaction increases the PTPN11 phosphatase activity. Interacts (via SH2 domain) with TEK/TIE2 (tyrosine phosphorylated). Interacts with CEACAM1 (via cytoplasmic domain); this interaction depends on the monomer/dimer equilibrium and is phosphorylation-dependent. Interacts with MPIG6B (via ITIM motif). Interacts with SIGLEC10. Interacts with Lilrb4a (when tyrosine phosphorylated). Interacts with SIGLEC10. Interacts with CLEC12B (via ITIM motif); this interaction triggers dephosphorylation and activation of PTPN11. Interacts (via SH2 domains) with NEDD9/CAS-L; the interaction is enhanced when NEDD9/CAS-L is tyrosine phosphorylated. Interacts with PIRB; when PIRB is phosphorylated by LYN at 'Tyr-794' and 'Tyr-824'. In terms of processing, phosphorylated on Tyr-542 and Tyr-580 upon receptor protein tyrosine kinase activation; which creates a binding site for GRB2 and other SH2-containing proteins. Phosphorylated upon activation of the receptor-type kinase FLT3. Phosphorylated by activated PDGFRB. Phosphorylated upon activation of the receptor-type kinase PDGFRA. In terms of tissue distribution, highly expressed in brain, heart and kidney.

It localises to the cytoplasm. It catalyses the reaction O-phospho-L-tyrosyl-[protein] + H2O = L-tyrosyl-[protein] + phosphate. Its function is as follows. Acts downstream of various receptor and cytoplasmic protein tyrosine kinases to participate in the signal transduction from the cell surface to the nucleus. Positively regulates MAPK signal transduction pathway. Dephosphorylates GAB1, ARHGAP35 and EGFR. Dephosphorylates ROCK2 at 'Tyr-722' resulting in stimulation of its RhoA binding activity. Dephosphorylates CDC73. Dephosphorylates SOX9 on tyrosine residues, leading to inactivate SOX9 and promote ossification. Dephosphorylates tyrosine-phosphorylated NEDD9/CAS-L. The polypeptide is Tyrosine-protein phosphatase non-receptor type 11 (Ptpn11) (Mus musculus (Mouse)).